The sequence spans 79 residues: Acyl carrier protein (79 aa).

Residues 2 to 77 (ADHASKIKDI…DAVAYLEAKV (76 aa)) enclose the Carrier domain. Residue serine 37 is modified to O-(pantetheine 4'-phosphoryl)serine.

It belongs to the acyl carrier protein (ACP) family. Post-translationally, 4'-phosphopantetheine is transferred from CoA to a specific serine of apo-ACP by AcpS. This modification is essential for activity because fatty acids are bound in thioester linkage to the sulfhydryl of the prosthetic group.

The protein localises to the cytoplasm. It functions in the pathway lipid metabolism; fatty acid biosynthesis. Its function is as follows. Carrier of the growing fatty acid chain in fatty acid biosynthesis. In Gemmatimonas aurantiaca (strain DSM 14586 / JCM 11422 / NBRC 100505 / T-27), this protein is Acyl carrier protein.